The following is a 283-amino-acid chain: Formamidopyrimidine-DNA glycosylase (283 aa).

Residue P2 is the Schiff-base intermediate with DNA of the active site. The active-site Proton donor is E3. Residue K60 is the Proton donor; for beta-elimination activity of the active site. Positions 100, 119, and 164 each coordinate DNA. An FPG-type zinc finger spans residues 249 to 283; the sequence is WVYGRENKPCRKCGVKILKAKVAGRGTHWCPNCQK. R273 (proton donor; for delta-elimination activity) is an active-site residue.

This sequence belongs to the FPG family. In terms of assembly, monomer. Zn(2+) is required as a cofactor.

The enzyme catalyses Hydrolysis of DNA containing ring-opened 7-methylguanine residues, releasing 2,6-diamino-4-hydroxy-5-(N-methyl)formamidopyrimidine.. It carries out the reaction 2'-deoxyribonucleotide-(2'-deoxyribose 5'-phosphate)-2'-deoxyribonucleotide-DNA = a 3'-end 2'-deoxyribonucleotide-(2,3-dehydro-2,3-deoxyribose 5'-phosphate)-DNA + a 5'-end 5'-phospho-2'-deoxyribonucleoside-DNA + H(+). Involved in base excision repair of DNA damaged by oxidation or by mutagenic agents. Acts as a DNA glycosylase that recognizes and removes damaged bases. Has a preference for oxidized purines, such as 7,8-dihydro-8-oxoguanine (8-oxoG). Has AP (apurinic/apyrimidinic) lyase activity and introduces nicks in the DNA strand. Cleaves the DNA backbone by beta-delta elimination to generate a single-strand break at the site of the removed base with both 3'- and 5'-phosphates. This Prochlorococcus marinus (strain SARG / CCMP1375 / SS120) protein is Formamidopyrimidine-DNA glycosylase.